The sequence spans 913 residues: Collagen alpha-2(I) chain (913 aa).

The tract at residues 1–913 (SGGFDFSFLP…FGYEGDFYRA (913 aa)) is disordered. A 4-hydroxyproline mark is found at P10, P13, P35, and P41. 3 stretches are compositionally biased toward low complexity: residues 28 to 67 (LMGP…ARGP), 125 to 154 (VGAP…SAGP), and 199 to 220 (PGAN…AGAP). Positions 254-263 (GESGGKGEPG) are enriched in gly residues. The segment covering 264–274 (SAGPQGPPGSS) has biased composition (low complexity). Residues 281 to 303 (GPNGGSTGPTGPPGLRGGPGSRG) show a composition bias toward gly residues. Low complexity predominate over residues 316 to 332 (PAGARGASGPAGVRGPS). 4-hydroxyproline is present on residues P338 and P341. Composition is skewed to low complexity over residues 367–386 (LPGI…RGEA) and 408–421 (PDGN…PGLQ). Over residues 422–431 (GVQGGKGTTG) the composition is skewed to gly residues. Composition is skewed to low complexity over residues 459 to 476 (PGES…SRGP) and 488 to 498 (EPGVVGAPGTA). Residues 499–517 (GPAGSGGPGERGAAGIPGG) show a composition bias toward gly residues. Composition is skewed to low complexity over residues 527–574 (RGEV…PRGS) and 581–601 (VGPA…QPGA). Positions 602–611 (KGERGTKGPK) are enriched in basic and acidic residues. Over residues 619-629 (PTGPVGSAGPA) the composition is skewed to low complexity. Residues 639 to 648 (GSRGDGGPPG) are compositionally biased toward gly residues. The segment covering 650–659 (TGFPGAAGRT) has biased composition (low complexity). The segment covering 696-705 (GETGAGGPPG) has biased composition (gly residues). Low complexity-rich tracts occupy residues 713–740 (SGEP…LGLP) and 748–758 (LPGVAGAVGEP). Residues 759 to 776 (GPLGIGPPGARGPSGAGK) are compositionally biased toward gly residues. Residues 782–797 (EPGPVGSVGPVGALGP) are compositionally biased toward low complexity. Residues 807-818 (RGDKGEPGEKGP) show a composition bias toward basic and acidic residues. Over residues 883–895 (SGPPGPPGPPGPP) the composition is skewed to pro residues.

This sequence belongs to the fibrillar collagen family. In terms of assembly, trimers of one alpha 2(I) and two alpha 1(I) chains. Interacts (via C-terminus) with TMEM131 (via PapD-L domain); the interaction is direct and is involved in assembly and TRAPPIII ER-to-Golgi transport complex-dependent secretion of collagen. In terms of processing, prolines at the third position of the tripeptide repeating unit (G-X-Y) are hydroxylated in some or all of the chains. In terms of tissue distribution, expressed in bones.

The protein resides in the secreted. It localises to the extracellular space. The protein localises to the extracellular matrix. Functionally, type I collagen is a member of group I collagen (fibrillar forming collagen). In Parocnus serus (Greater Haitian ground sloth), this protein is Collagen alpha-2(I) chain.